A 703-amino-acid polypeptide reads, in one-letter code: Phosphoribosylformylglycinamidine synthase subunit PurL (703 aa).

His-36 is an active-site residue. Positions 39 and 80 each coordinate ATP. A Mg(2+)-binding site is contributed by Glu-82. Residues 83–86 (SHNH) and Arg-105 contribute to the substrate site. Catalysis depends on His-84, which acts as the Proton acceptor. Asp-106 contacts Mg(2+). Gln-226 is a binding site for substrate. Asp-252 contacts Mg(2+). 294 to 296 (ETQ) is a binding site for substrate. ATP is bound by residues Asp-468 and Gly-505. Ser-508 provides a ligand contact to substrate.

The protein belongs to the FGAMS family. Monomer. Part of the FGAM synthase complex composed of 1 PurL, 1 PurQ and 2 PurS subunits.

It is found in the cytoplasm. The enzyme catalyses N(2)-formyl-N(1)-(5-phospho-beta-D-ribosyl)glycinamide + L-glutamine + ATP + H2O = 2-formamido-N(1)-(5-O-phospho-beta-D-ribosyl)acetamidine + L-glutamate + ADP + phosphate + H(+). It participates in purine metabolism; IMP biosynthesis via de novo pathway; 5-amino-1-(5-phospho-D-ribosyl)imidazole from N(2)-formyl-N(1)-(5-phospho-D-ribosyl)glycinamide: step 1/2. Functionally, part of the phosphoribosylformylglycinamidine synthase complex involved in the purines biosynthetic pathway. Catalyzes the ATP-dependent conversion of formylglycinamide ribonucleotide (FGAR) and glutamine to yield formylglycinamidine ribonucleotide (FGAM) and glutamate. The FGAM synthase complex is composed of three subunits. PurQ produces an ammonia molecule by converting glutamine to glutamate. PurL transfers the ammonia molecule to FGAR to form FGAM in an ATP-dependent manner. PurS interacts with PurQ and PurL and is thought to assist in the transfer of the ammonia molecule from PurQ to PurL. The sequence is that of Phosphoribosylformylglycinamidine synthase subunit PurL from Sulfurisphaera tokodaii (strain DSM 16993 / JCM 10545 / NBRC 100140 / 7) (Sulfolobus tokodaii).